The primary structure comprises 206 residues: Ribosomal RNA small subunit methyltransferase G (206 aa).

S-adenosyl-L-methionine is bound by residues Gly-73, Leu-78, 124–125, and Arg-139; that span reads VE.

This sequence belongs to the methyltransferase superfamily. RNA methyltransferase RsmG family.

It localises to the cytoplasm. It catalyses the reaction guanosine(527) in 16S rRNA + S-adenosyl-L-methionine = N(7)-methylguanosine(527) in 16S rRNA + S-adenosyl-L-homocysteine. Specifically methylates the N7 position of guanine in position 527 of 16S rRNA. This is Ribosomal RNA small subunit methyltransferase G from Pectobacterium carotovorum subsp. carotovorum (strain PC1).